A 990-amino-acid polypeptide reads, in one-letter code: Pro-apoptotic serine protease NMA111 (990 aa).

The disordered stretch occupies residues Met-1 to Thr-32. Residues Val-73–Leu-263 form a serine protease region. Catalysis depends on charge relay system residues His-111, Asp-142, and Ser-225. 2 PDZ domains span residues Arg-290–Gly-368 and Ser-758–Gly-843.

Belongs to the peptidase S1C family.

It is found in the nucleus. Functionally, nuclear serine protease which mediates apoptosis. The polypeptide is Pro-apoptotic serine protease NMA111 (NMA111) (Vanderwaltozyma polyspora (strain ATCC 22028 / DSM 70294 / BCRC 21397 / CBS 2163 / NBRC 10782 / NRRL Y-8283 / UCD 57-17) (Kluyveromyces polysporus)).